A 293-amino-acid polypeptide reads, in one-letter code: Meteorin (293 aa).

Residues 1–23 (MGFPAAALLCALCCGLLAPAARA) form the signal peptide. 5 cysteine pairs are disulfide-bonded: Cys30–Cys51, Cys82–Cys118, Cys171–Cys242, Cys174–Cys266, and Cys184–Cys288.

Belongs to the meteorin family. As to quaternary structure, monomer.

The protein resides in the secreted. In terms of biological role, involved in both glial cell differentiation and axonal network formation during neurogenesis. Promotes astrocyte differentiation and transforms cerebellar astrocytes into radial glia. Also induces axonal extension in small and intermediate neurons of sensory ganglia by activating nearby satellite glia. This chain is Meteorin (METRN), found in Homo sapiens (Human).